The chain runs to 345 residues: Phosphoribosylformylglycinamidine cyclo-ligase (345 aa).

This sequence belongs to the AIR synthase family.

The protein localises to the cytoplasm. It carries out the reaction 2-formamido-N(1)-(5-O-phospho-beta-D-ribosyl)acetamidine + ATP = 5-amino-1-(5-phospho-beta-D-ribosyl)imidazole + ADP + phosphate + H(+). It functions in the pathway purine metabolism; IMP biosynthesis via de novo pathway; 5-amino-1-(5-phospho-D-ribosyl)imidazole from N(2)-formyl-N(1)-(5-phospho-D-ribosyl)glycinamide: step 2/2. The polypeptide is Phosphoribosylformylglycinamidine cyclo-ligase (Histophilus somni (strain 129Pt) (Haemophilus somnus)).